Here is a 251-residue protein sequence, read N- to C-terminus: 3-dehydroquinate dehydratase (251 aa).

3-dehydroquinate-binding positions include 47–49 (EWR) and R83. H144 (proton donor/acceptor) is an active-site residue. The Schiff-base intermediate with substrate role is filled by K171. The 3-dehydroquinate site is built by R214, S233, and Q237.

Belongs to the type-I 3-dehydroquinase family. In terms of assembly, homodimer.

The catalysed reaction is 3-dehydroquinate = 3-dehydroshikimate + H2O. The protein operates within metabolic intermediate biosynthesis; chorismate biosynthesis; chorismate from D-erythrose 4-phosphate and phosphoenolpyruvate: step 3/7. Its function is as follows. Involved in the third step of the chorismate pathway, which leads to the biosynthesis of aromatic amino acids. Catalyzes the cis-dehydration of 3-dehydroquinate (DHQ) and introduces the first double bond of the aromatic ring to yield 3-dehydroshikimate. The sequence is that of 3-dehydroquinate dehydratase from Klebsiella pneumoniae (strain 342).